We begin with the raw amino-acid sequence, 353 residues long: Carbamoyl phosphate synthase arginine-specific small chain (353 aa).

A CPSase region spans residues 1–162 (MEGYLVLEDG…EISTFGDGNK (162 aa)). Residues Ser-44, Gly-210, and Gly-212 each coordinate L-glutamine. A Glutamine amidotransferase type-1 domain is found at 163 to 349 (HIALIDFGYK…LKNVIPARRE (187 aa)). The Nucleophile role is filled by Cys-237. Leu-238, Gln-241, Asn-279, and Tyr-282 together coordinate L-glutamine. Residues His-322 and Glu-324 contribute to the active site.

It belongs to the CarA family. As to quaternary structure, composed of two chains; the small (or glutamine) chain promotes the hydrolysis of glutamine to ammonia, which is used by the large (or ammonia) chain to synthesize carbamoyl phosphate. Tetramer of heterodimers (alpha,beta)4.

It catalyses the reaction hydrogencarbonate + L-glutamine + 2 ATP + H2O = carbamoyl phosphate + L-glutamate + 2 ADP + phosphate + 2 H(+). The enzyme catalyses L-glutamine + H2O = L-glutamate + NH4(+). Its pathway is amino-acid biosynthesis; L-arginine biosynthesis; carbamoyl phosphate from bicarbonate: step 1/1. Its function is as follows. Small subunit of the glutamine-dependent carbamoyl phosphate synthetase (CPSase). CPSase catalyzes the formation of carbamoyl phosphate from the ammonia moiety of glutamine, carbonate, and phosphate donated by ATP, constituting the first step of the biosynthetic pathway leading to arginine and/or urea. The small subunit (glutamine amidotransferase) binds and cleaves glutamine to supply the large subunit with the substrate ammonia. This Bacillus subtilis (strain 168) protein is Carbamoyl phosphate synthase arginine-specific small chain.